The following is a 284-amino-acid chain: Xyloglucan endotransglucosylase/hydrolase protein 22 (284 aa).

An N-terminal signal peptide occupies residues 1–21 (MAITYLLPLFLSLIITSSVSA). The region spanning 22 to 211 (NFQRDVEITW…WSKAPFTASY (190 aa)) is the GH16 domain. Residue glutamate 97 is the Nucleophile of the active site. Glutamate 101 (proton donor) is an active-site residue. Glutamate 101 contributes to the xyloglucan binding site. Residue asparagine 105 is glycosylated (N-linked (GlcNAc...) asparagine). Residues 114–116 (HTN), 124–126 (DKE), 190–191 (DW), and glycine 195 contribute to the xyloglucan site. Cysteine 219 and cysteine 228 are joined by a disulfide. Residue asparagine 230 is glycosylated (N-linked (GlcNAc...) asparagine). A disulfide bridge connects residues cysteine 267 and cysteine 281. Xyloglucan is bound at residue arginine 272.

The protein belongs to the glycosyl hydrolase 16 family. XTH group 2 subfamily. In terms of processing, contains at least one intrachain disulfide bond essential for its enzymatic activity. N-glycosylated; essential for its enzymatic activity. As to expression, highly expressed. Predominantly expressed in green siliques. Expressed in young expanding leaves, trichomes, lateral root primordia, vascular tissue, abscission zones and elongating hypocols. Following wind stimulation, it decreases in the leaves of wind-stimulated plants, while it strongly increases in sites around cells of the pith parenchyma, between the vascular elements, and within the epidermis.

It localises to the secreted. Its subcellular location is the cell wall. The protein localises to the extracellular space. It is found in the apoplast. The catalysed reaction is breaks a beta-(1-&gt;4) bond in the backbone of a xyloglucan and transfers the xyloglucanyl segment on to O-4 of the non-reducing terminal glucose residue of an acceptor, which can be a xyloglucan or an oligosaccharide of xyloglucan.. Functionally, catalyzes xyloglucan endohydrolysis (XEH) and/or endotransglycosylation (XET). Cleaves and religates xyloglucan polymers, an essential constituent of the primary cell wall, and thereby participates in cell wall construction of growing tissues. Its induction in case of mechanical stress, suggests that it may contribute in the adaptive changes in morphogenesis by being recruited to alter tissues tensil strength, or flexibility, enabling adaptation to mechanically stressful environments. The sequence is that of Xyloglucan endotransglucosylase/hydrolase protein 22 (XTH22) from Arabidopsis thaliana (Mouse-ear cress).